Consider the following 282-residue polypeptide: Bifunctional protein FolD (282 aa).

NADP(+) contacts are provided by residues 165–167, T192, and V233; that span reads GRG.

Belongs to the tetrahydrofolate dehydrogenase/cyclohydrolase family. In terms of assembly, homodimer.

It catalyses the reaction (6R)-5,10-methylene-5,6,7,8-tetrahydrofolate + NADP(+) = (6R)-5,10-methenyltetrahydrofolate + NADPH. The catalysed reaction is (6R)-5,10-methenyltetrahydrofolate + H2O = (6R)-10-formyltetrahydrofolate + H(+). It participates in one-carbon metabolism; tetrahydrofolate interconversion. Catalyzes the oxidation of 5,10-methylenetetrahydrofolate to 5,10-methenyltetrahydrofolate and then the hydrolysis of 5,10-methenyltetrahydrofolate to 10-formyltetrahydrofolate. The protein is Bifunctional protein FolD of Mycobacterium leprae (strain Br4923).